The following is a 61-amino-acid chain: Photosystem II reaction center X protein (61 aa).

The helical transmembrane segment at 26-46 threads the bilayer; the sequence is IGSFIAAALLIVIPATAFLIF.

The protein belongs to the PsbX family. Type 2 subfamily. In terms of assembly, PSII consists of a core antenna complex that captures photons, and an electron transfer chain that converts photonic excitation into a charge separation. PSII forms dimeric complexes.

Its subcellular location is the cellular thylakoid membrane. Its function is as follows. Involved in the binding and/or turnover of quinones at the Q(B) site of Photosystem II. In Prochlorococcus marinus (strain MIT 9312), this protein is Photosystem II reaction center X protein.